Consider the following 271-residue polypeptide: 4-hydroxy-tetrahydrodipicolinate reductase (271 aa).

NAD(+) contacts are provided by residues 10-15 (GAGGRM), Glu-36, 100-102 (GTT), and 124-127 (SGNM). His-157 (proton donor/acceptor) is an active-site residue. (S)-2,3,4,5-tetrahydrodipicolinate is bound at residue His-158. The active-site Proton donor is the Lys-161. Residue 167 to 168 (GT) participates in (S)-2,3,4,5-tetrahydrodipicolinate binding.

This sequence belongs to the DapB family.

It is found in the cytoplasm. It catalyses the reaction (S)-2,3,4,5-tetrahydrodipicolinate + NAD(+) + H2O = (2S,4S)-4-hydroxy-2,3,4,5-tetrahydrodipicolinate + NADH + H(+). It carries out the reaction (S)-2,3,4,5-tetrahydrodipicolinate + NADP(+) + H2O = (2S,4S)-4-hydroxy-2,3,4,5-tetrahydrodipicolinate + NADPH + H(+). It functions in the pathway amino-acid biosynthesis; L-lysine biosynthesis via DAP pathway; (S)-tetrahydrodipicolinate from L-aspartate: step 4/4. In terms of biological role, catalyzes the conversion of 4-hydroxy-tetrahydrodipicolinate (HTPA) to tetrahydrodipicolinate. This Rhodopseudomonas palustris (strain HaA2) protein is 4-hydroxy-tetrahydrodipicolinate reductase.